A 493-amino-acid chain; its full sequence is Probable mannosyl-oligosaccharide alpha-1,2-mannosidase 1B (493 aa).

Positions 1–18 are cleaved as a signal peptide; sequence MHLPSLSVALALVSSSLA. 2 N-linked (GlcNAc...) asparagine glycosylation sites follow: Asn-87 and Asn-174. Cys-324 and Cys-353 form a disulfide bridge. Glu-367 (proton donor) is an active-site residue. Asn-489 is a glycosylation site (N-linked (GlcNAc...) asparagine).

It belongs to the glycosyl hydrolase 47 family. Monomer. The cofactor is Ca(2+). Mg(2+) serves as cofactor.

The protein localises to the cytoplasmic vesicle lumen. The enzyme catalyses N(4)-(alpha-D-Man-(1-&gt;2)-alpha-D-Man-(1-&gt;2)-alpha-D-Man-(1-&gt;3)-[alpha-D-Man-(1-&gt;2)-alpha-D-Man-(1-&gt;3)-[alpha-D-Man-(1-&gt;2)-alpha-D-Man-(1-&gt;6)]-alpha-D-Man-(1-&gt;6)]-beta-D-Man-(1-&gt;4)-beta-D-GlcNAc-(1-&gt;4)-beta-D-GlcNAc)-L-asparaginyl-[protein] (N-glucan mannose isomer 9A1,2,3B1,2,3) + 4 H2O = N(4)-(alpha-D-Man-(1-&gt;3)-[alpha-D-Man-(1-&gt;3)-[alpha-D-Man-(1-&gt;6)]-alpha-D-Man-(1-&gt;6)]-beta-D-Man-(1-&gt;4)-beta-D-GlcNAc-(1-&gt;4)-beta-D-GlcNAc)-L-asparaginyl-[protein] (N-glucan mannose isomer 5A1,2) + 4 beta-D-mannose. The catalysed reaction is N(4)-(alpha-D-Man-(1-&gt;2)-alpha-D-Man-(1-&gt;2)-alpha-D-Man-(1-&gt;3)-[alpha-D-Man-(1-&gt;3)-[alpha-D-Man-(1-&gt;2)-alpha-D-Man-(1-&gt;6)]-alpha-D-Man-(1-&gt;6)]-beta-D-Man-(1-&gt;4)-beta-D-GlcNAc-(1-&gt;4)-beta-D-GlcNAc)-L-asparaginyl-[protein] (N-glucan mannose isomer 8A1,2,3B1,3) + 3 H2O = N(4)-(alpha-D-Man-(1-&gt;3)-[alpha-D-Man-(1-&gt;3)-[alpha-D-Man-(1-&gt;6)]-alpha-D-Man-(1-&gt;6)]-beta-D-Man-(1-&gt;4)-beta-D-GlcNAc-(1-&gt;4)-beta-D-GlcNAc)-L-asparaginyl-[protein] (N-glucan mannose isomer 5A1,2) + 3 beta-D-mannose. Its pathway is protein modification; protein glycosylation. Involved in the maturation of Asn-linked oligosaccharides. Progressively trims alpha-1,2-linked mannose residues from Man(9)GlcNAc(2) to produce Man(5)GlcNAc(2). The sequence is that of Probable mannosyl-oligosaccharide alpha-1,2-mannosidase 1B (mns1B) from Neosartorya fischeri (strain ATCC 1020 / DSM 3700 / CBS 544.65 / FGSC A1164 / JCM 1740 / NRRL 181 / WB 181) (Aspergillus fischerianus).